The sequence spans 288 residues: Solute carrier family 25 member 47-B (288 aa).

Solcar repeat units follow at residues 1-83 (MHLA…ILQF), 99-191 (AHIF…ICEI), and 199-286 (PGWP…VVRL). A run of 6 helical transmembrane segments spans residues 3 to 23 (LADF…GYPL), 58 to 75 (GMSM…LVFG), 101 to 121 (IFLA…PADI), 175 to 195 (GPSF…LTTE), 199 to 219 (PGWP…WAVG), and 257 to 277 (VLFR…MSVF).

Belongs to the mitochondrial carrier (TC 2.A.29) family.

The protein localises to the mitochondrion inner membrane. The polypeptide is Solute carrier family 25 member 47-B (slc25a47b) (Danio rerio (Zebrafish)).